The following is a 227-amino-acid chain: Ribonuclease S-5 (227 aa).

A signal peptide spans 1 to 27; that stretch reads MGITGMVYVVTMVFLLIVLILSSSTVG. Q36 contacts RNA. C42 and C49 are oxidised to a cystine. Residue N45 is glycosylated (N-linked (GlcNAc...) asparagine). Residues H60, 97–98, F107, 110–111, and 114–115 contribute to the RNA site; these read NV, KE, and KH. The Proton donor role is filled by H60. A disulfide bond links C75 and C118. E111 is a catalytic residue. H115 serves as the catalytic Proton acceptor. N143 carries an N-linked (GlcNAc...) asparagine glycan. 2 cysteine pairs are disulfide-bonded: C182–C220 and C197–C208.

This sequence belongs to the RNase T2 family. Post-translationally, N-glycan at Asn-45 consists of disaccharide (GlcNAc-GlcNAc). N-linked core structure at Asn-143 contains xylose.

It carries out the reaction a ribonucleotidyl-ribonucleotide-RNA + H2O = a 3'-end 3'-phospho-ribonucleotide-RNA + a 5'-end dephospho-ribonucleoside-RNA + H(+). In terms of biological role, self-incompatibility (SI) is the inherited ability of a flowering plant to prevent self-fertilization by discriminating between self and non-self pollen during pollination. In many species, self-incompatibility is controlled by the single, multiallelic locus S. The protein is Ribonuclease S-5 of Pyrus pyrifolia (Chinese pear).